We begin with the raw amino-acid sequence, 950 residues long: Protocadherin alpha-9 (950 aa).

Positions 1 to 29 are cleaved as a signal peptide; it reads MLYSSRGDPEGQPLLLSLLILAMWVVGSG. Cadherin domains follow at residues 30-133, 134-242, 243-350, 351-455, 456-565, and 588-678; these read QLHY…PPVF, PATQ…APVF, DRTL…APQL, TIKT…APAF, AQSE…APAL, and GVVV…APKS. Residues 30-697 are Extracellular-facing; that stretch reads QLHYSVPEEA…GPEVTLVDVN (668 aa). N-linked (GlcNAc...) asparagine glycans are attached at residues N254 and N265. N548 is a glycosylation site (N-linked (GlcNAc...) asparagine). The helical transmembrane segment at 698 to 718 threads the bilayer; sequence VYLIIAICAVSSLLVLTLLLY. Residues 719 to 950 lie on the Cytoplasmic side of the membrane; the sequence is TVLRCSAMPT…GNSTTDNSDQ (232 aa). One copy of the PXXP 1 repeat lies at 734 to 737; that stretch reads PGKP. The interval 734 to 894 is 5 X 4 AA repeats of P-X-X-P; sequence PGKPTLVCSS…PDKFIIPGSP (161 aa). 3 disordered regions span residues 770 to 808, 827 to 856, and 871 to 950; these read MAFS…DWRY, ILRA…EVSP, and YGPG…NSDQ. Over residues 789–798 the composition is skewed to polar residues; it reads PSASSDSTGK. PXXP repeat units lie at residues 799-802, 832-835, 873-876, and 891-894; these read PRQP, PGGP, PGNP, and PGSP. The span at 909–923 shows a compositional bias: basic and acidic residues; sequence DKSDFITFGKKEETK.

It localises to the cell membrane. Functionally, potential calcium-dependent cell-adhesion protein. May be involved in the establishment and maintenance of specific neuronal connections in the brain. This is Protocadherin alpha-9 (PCDHA9) from Homo sapiens (Human).